A 618-amino-acid polypeptide reads, in one-letter code: Glucose starvation modulator protein 1 (618 aa).

The zn(2)-C6 fungal-type DNA-binding region spans 20–48; that stretch reads CEFCHTKHIQCDVGRPCQNCLKRNIGKFC. The disordered stretch occupies residues 325-352; it reads ANANTHPSHNAKLESECDSSSHSDADLE. Positions 335 to 352 are enriched in basic and acidic residues; the sequence is AKLESECDSSSHSDADLE. A PAS domain is found at 466-538; that stretch reads LLDLENMAKL…QIFNELLAFG (73 aa).

Belongs to the ERT1/acuK family.

It is found in the nucleus. Functionally, transcription factor which regulates nonfermentable carbon utilization. Binds specifically to 5'-CGGN(8)CGG-3' and 5'-CGGN(9)CGG-3' sequences in the promoter region. In Saccharomyces cerevisiae (strain ATCC 204508 / S288c) (Baker's yeast), this protein is Glucose starvation modulator protein 1 (GSM1).